Here is a 159-residue protein sequence, read N- to C-terminus: Ribosomal RNA large subunit methyltransferase H (159 aa).

Residues L76 and G108 each contribute to the S-adenosyl-L-methionine site.

The protein belongs to the RNA methyltransferase RlmH family. Homodimer.

Its subcellular location is the cytoplasm. The enzyme catalyses pseudouridine(1915) in 23S rRNA + S-adenosyl-L-methionine = N(3)-methylpseudouridine(1915) in 23S rRNA + S-adenosyl-L-homocysteine + H(+). In terms of biological role, specifically methylates the pseudouridine at position 1915 (m3Psi1915) in 23S rRNA. This is Ribosomal RNA large subunit methyltransferase H from Levilactobacillus brevis (strain ATCC 367 / BCRC 12310 / CIP 105137 / JCM 1170 / LMG 11437 / NCIMB 947 / NCTC 947) (Lactobacillus brevis).